We begin with the raw amino-acid sequence, 60 residues long: Metallothionein B (60 aa).

Positions 1–28 are beta; that stretch reads MDPCECSKSGTCNCGGSCTCTNCSCTSC. Cysteine 4, cysteine 6, cysteine 12, cysteine 14, cysteine 18, cysteine 20, cysteine 23, cysteine 25, cysteine 28, cysteine 32, cysteine 33, cysteine 35, cysteine 36, cysteine 40, cysteine 43, cysteine 47, cysteine 49, cysteine 54, cysteine 58, and cysteine 59 together coordinate a divalent metal cation. Positions 29–60 are alpha; sequence KKSCCPCCPSGCTKCASGCVCKGKTCDTSCCQ.

It belongs to the metallothionein superfamily. Type 1 family.

Functionally, metallothioneins have a high content of cysteine residues that bind various heavy metals. The polypeptide is Metallothionein B (mtb) (Trematomus bernacchii (Emerald rockcod)).